A 78-amino-acid chain; its full sequence is uncharacterized protein (78 aa).

The tract at residues 1-78 is disordered; the sequence is MSSNSNTDHS…VDLEGPKDEQ (78 aa). Basic and acidic residues-rich tracts occupy residues 10-33 and 63-78; these read STGDNRSKSEKQTDLRNALRETES and LNLKEPVDLEGPKDEQ.

This is an uncharacterized protein from Schizosaccharomyces pombe (strain 972 / ATCC 24843) (Fission yeast).